The sequence spans 720 residues: Ciliated left-right organizer metallopeptidase (720 aa).

Residues 1-25 (MTVSFSMFQIYRLVWLSFMTSMCLS) form the signal peptide. Residues 26 to 668 (ACIHDSVLQE…ALYVSHMLYS (643 aa)) lie on the Extracellular side of the membrane. Zn(2+) is bound at residue His-243. Glu-244 is an active-site residue. 2 residues coordinate Zn(2+): His-247 and His-322. Residues 669 to 689 (YVIGGGCCAVCGAAIIFALFW) traverse the membrane as a helical segment. The Cytoplasmic segment spans residues 690–720 (YKLRRQFLRVGSSYPPETSNHERPQIPADLV).

It belongs to the peptidase M8 family. Requires Zn(2+) as cofactor.

It localises to the membrane. In terms of biological role, putative metalloprotease playing a role in the process of LR patterning. The chain is Ciliated left-right organizer metallopeptidase (cirop) from Xenopus laevis (African clawed frog).